The primary structure comprises 357 residues: Probable xyloglucan endotransglucosylase/hydrolase protein 29 (357 aa).

Residues Met1–Gly31 form the signal peptide. One can recognise a GH16 domain in the interval Leu32–Phe232. Residue Glu117 is the Nucleophile of the active site. Residue Glu121 is the Proton donor of the active site. Xyloglucan-binding positions include Glu121 and Gln134–Asn136. A glycan (N-linked (GlcNAc...) asparagine) is linked at Asn140. Residues Asn144 to Glu148, Ser211 to Trp212, and Gly216 contribute to the xyloglucan site. N-linked (GlcNAc...) asparagine glycosylation is found at Asn241 and Asn262. Cys299 and Cys312 are joined by a disulfide. Arg304 lines the xyloglucan pocket. A disordered region spans residues Gly326–Leu357. The segment covering Pro335–Arg348 has biased composition (basic residues). Asn347 is a glycosylation site (N-linked (GlcNAc...) asparagine).

The protein belongs to the glycosyl hydrolase 16 family. XTH group 3 subfamily. Post-translationally, contains at least one intrachain disulfide bond essential for its enzymatic activity.

Its subcellular location is the secreted. It is found in the cell wall. It localises to the extracellular space. The protein localises to the apoplast. It catalyses the reaction breaks a beta-(1-&gt;4) bond in the backbone of a xyloglucan and transfers the xyloglucanyl segment on to O-4 of the non-reducing terminal glucose residue of an acceptor, which can be a xyloglucan or an oligosaccharide of xyloglucan.. Its function is as follows. Catalyzes xyloglucan endohydrolysis (XEH) and/or endotransglycosylation (XET). Cleaves and religates xyloglucan polymers, an essential constituent of the primary cell wall, and thereby participates in cell wall construction of growing tissues. This chain is Probable xyloglucan endotransglucosylase/hydrolase protein 29 (XTH29), found in Arabidopsis thaliana (Mouse-ear cress).